The primary structure comprises 808 residues: Anaphase-promoting complex subunit 4 (808 aa).

Y469 bears the Phosphotyrosine mark. Phosphoserine is present on residues S757 and S758. Residue K772 forms a Glycyl lysine isopeptide (Lys-Gly) (interchain with G-Cter in SUMO2) linkage. S777 and S779 each carry phosphoserine. K798 participates in a covalent cross-link: Glycyl lysine isopeptide (Lys-Gly) (interchain with G-Cter in SUMO2).

This sequence belongs to the APC4 family. In terms of assembly, the mammalian APC/C is composed at least of 14 distinct subunits ANAPC1, ANAPC2, CDC27/APC3, ANAPC4, ANAPC5, CDC16/APC6, ANAPC7, CDC23/APC8, ANAPC10, ANAPC11, CDC26/APC12, ANAPC13, ANAPC15 and ANAPC16 that assemble into a complex of at least 19 chains with a combined molecular mass of around 1.2 MDa; APC/C interacts with FZR1 and FBXO5. In the context of the APC/C complex, directly interacts with UBE2S. Interacts with FBXO43.

The protein resides in the nucleus. It participates in protein modification; protein ubiquitination. Its function is as follows. Component of the anaphase promoting complex/cyclosome (APC/C), a cell cycle-regulated E3 ubiquitin ligase that controls progression through mitosis and the G1 phase of the cell cycle. The APC/C complex acts by mediating ubiquitination and subsequent degradation of target proteins: it mainly mediates the formation of 'Lys-11'-linked polyubiquitin chains and, to a lower extent, the formation of 'Lys-48'- and 'Lys-63'-linked polyubiquitin chains. The APC/C complex catalyzes assembly of branched 'Lys-11'-/'Lys-48'-linked branched ubiquitin chains on target proteins. This Homo sapiens (Human) protein is Anaphase-promoting complex subunit 4 (ANAPC4).